A 304-amino-acid chain; its full sequence is Lipid droplet-associated hydrolase (304 aa).

The active-site Nucleophile is Ser-119. Active-site charge relay system residues include Asp-250 and His-279.

Belongs to the AB hydrolase superfamily. LDAH family.

The protein resides in the lipid droplet. It catalyses the reaction a cholesterol ester + H2O = cholesterol + a fatty acid + H(+). Its function is as follows. Probable serine lipid hydrolase associated with lipid droplets. Has low cholesterol esterase activity. Appears to lack triglyceride lipase activity. Involved in cholesterol and triglyceride homeostasis; stimulates cellular triglyceride accumulation and cellular cholesterol release. The sequence is that of Lipid droplet-associated hydrolase from Dictyostelium discoideum (Social amoeba).